We begin with the raw amino-acid sequence, 948 residues long: Phosphoenolpyruvate carboxylase (948 aa).

Active-site residues include His-138 and Lys-610.

Belongs to the PEPCase type 1 family. It depends on Mg(2+) as a cofactor.

The catalysed reaction is oxaloacetate + phosphate = phosphoenolpyruvate + hydrogencarbonate. Functionally, forms oxaloacetate, a four-carbon dicarboxylic acid source for the tricarboxylic acid cycle. This is Phosphoenolpyruvate carboxylase from Streptococcus gordonii (strain Challis / ATCC 35105 / BCRC 15272 / CH1 / DL1 / V288).